Consider the following 449-residue polypeptide: Glycine--tRNA ligase (449 aa).

Substrate contacts are provided by R100 and E158. ATP-binding positions include 190–192 (RNE), 200–205 (FRVREF), 275–276 (EL), and 319–322 (GIER). A substrate-binding site is contributed by 205–209 (FEQFE). Position 315 to 319 (315 to 319 (EPSVG)) interacts with substrate.

It belongs to the class-II aminoacyl-tRNA synthetase family. Homodimer.

It is found in the cytoplasm. The enzyme catalyses tRNA(Gly) + glycine + ATP = glycyl-tRNA(Gly) + AMP + diphosphate. In terms of biological role, catalyzes the attachment of glycine to tRNA(Gly). The chain is Glycine--tRNA ligase from Mycoplasma pneumoniae (strain ATCC 29342 / M129 / Subtype 1) (Mycoplasmoides pneumoniae).